Here is a 178-residue protein sequence, read N- to C-terminus: Nucleoside triphosphate/diphosphate phosphatase (178 aa).

The Proton donor role is filled by arginine 23. Positions 87, 103, 105, 107, 120, and 123 each coordinate Mg(2+).

It belongs to the Ntdp family. Mg(2+) serves as cofactor.

The enzyme catalyses a ribonucleoside 5'-triphosphate + H2O = a ribonucleoside 5'-diphosphate + phosphate + H(+). It catalyses the reaction a ribonucleoside 5'-diphosphate + H2O = a ribonucleoside 5'-phosphate + phosphate + H(+). Its function is as follows. Has nucleoside phosphatase activity towards nucleoside triphosphates and nucleoside diphosphates. In Latilactobacillus sakei subsp. sakei (strain 23K) (Lactobacillus sakei subsp. sakei), this protein is Nucleoside triphosphate/diphosphate phosphatase.